A 158-amino-acid polypeptide reads, in one-letter code: Small ribosomal subunit protein uS7 (158 aa).

This sequence belongs to the universal ribosomal protein uS7 family. In terms of assembly, part of the 30S ribosomal subunit. Contacts proteins S9 and S11.

One of the primary rRNA binding proteins, it binds directly to 16S rRNA where it nucleates assembly of the head domain of the 30S subunit. Is located at the subunit interface close to the decoding center, probably blocks exit of the E-site tRNA. This Christiangramia forsetii (strain DSM 17595 / CGMCC 1.15422 / KT0803) (Gramella forsetii) protein is Small ribosomal subunit protein uS7.